Here is a 402-residue protein sequence, read N- to C-terminus: Speedy protein E2B (402 aa).

Residues 1–89 are disordered; sequence MDRTETRFRK…EEPEKELAPE (89 aa). Residues 16 to 39 show a composition bias toward polar residues; the sequence is GKITTSRQPHPQNEQSPQRSTSGY. Acidic residues predominate over residues 76-89; sequence DESEEEPEKELAPE.

Belongs to the Speedy/Ringo family.

The sequence is that of Speedy protein E2B (SPDYE2B) from Homo sapiens (Human).